A 229-amino-acid polypeptide reads, in one-letter code: Ras-related protein Rab-33B (229 aa).

8 residues coordinate GTP: Asn43, Val44, Gly45, Lys46, Thr47, Cys48, Thr62, and Thr65. Thr47 contacts Mg(2+). The Switch 1 motif lies at 56–68 (GRFPDRTEATIGV). Mg(2+) contacts are provided by Thr65 and Asp88. Residues 89–108 (TAGQERFRKSMVQHYYRNVH) carry the Switch 2 motif. Gly91, Asn148, Lys149, Asp151, Ala179, and Lys180 together coordinate GTP. S-geranylgeranyl cysteine attachment occurs at residues Cys227 and Cys229. Cys229 carries the cysteine methyl ester modification.

It belongs to the small GTPase superfamily. Rab family. As to quaternary structure, interacts (GTP- and GDP-bound forms) with ATG16L1; the complex consists of a tetramer where two RAB33B molecules bind independently one molecule of the ATG16L1 homodimer; the interaction promotes ATG12-ATG5-ATG16L1 complex recruitment to phagophores. Interacts with ATG16L2; however interaction is approximately hundred times lower than for ATG16L1. Interacts with RIC1 (via C-terminus domain); the interaction is direct with a preference for RAB33B-GTP. Interacts with RGP1. The cofactor is Mg(2+). Prenylated.

Its subcellular location is the golgi apparatus membrane. It localises to the golgi apparatus. The protein localises to the cis-Golgi network. The protein resides in the preautophagosomal structure membrane. It carries out the reaction GTP + H2O = GDP + phosphate + H(+). With respect to regulation, regulated by guanine nucleotide exchange factors (GEFs) which promote the exchange of bound GDP for free GTP. Regulated by GTPase activating proteins (GAPs) such as SGSM2 which increase the GTP hydrolysis activity. Inhibited by GDP dissociation inhibitors (GDIs). The small GTPases Rab are key regulators of intracellular membrane trafficking, from the formation of transport vesicles to their fusion with membranes. Rabs cycle between an inactive GDP-bound form and an active GTP-bound form that is able to recruit to membranes different sets of downstream effectors directly responsible for vesicle formation, movement, tethering and fusion. RAB33B acts, in coordination with RAB6A, to regulate intra-Golgi retrograde trafficking. Participates in autophagosome formation by recruiting the ATG12-ATG5-ATG16L1 complex to phagophores, probably in a nucleotide-independent manner. The chain is Ras-related protein Rab-33B from Homo sapiens (Human).